Reading from the N-terminus, the 228-residue chain is Transmembrane protein 186 (228 aa).

Residues 1 to 93 are Mitochondrial matrix-facing; the sequence is MDMMMMSTRL…RGLRALSRLK (93 aa). Residues 94 to 112 form a helical membrane-spanning segment; sequence LLQTGITVVLLPTVYYLHL. Residues 113-118 lie on the Mitochondrial intermembrane side of the membrane; sequence QGQASV. Residues 119–141 form a helical membrane-spanning segment; sequence LVLNRSIGIALFAGVMLYSISHF. At 142–228 the chain is on the mitochondrial matrix side; it reads VRRVVGMMYL…AFGKVFGSLS (87 aa).

This sequence belongs to the TMEM186 family.

The protein resides in the mitochondrion inner membrane. May be required for efficient assembly of the mitochondrial complex I. This chain is Transmembrane protein 186, found in Danio rerio (Zebrafish).